A 272-amino-acid polypeptide reads, in one-letter code: MSIYTNSKPWTVPALAEAKRNGSKIVMLTAYDAGFARILDANGVDLVLVGDSLGMVVQGHDSTLPVSVHDMVYHTACVARGVRQAMLVVDLPFQADASPERALEAATPLLRVGAQMIKIEGAGHKLEVISYLVEREIPVCSHLGLTPQSVLRFGGYKVQGRGEEAGGRLRAEARAAVEAGATLLLLECVPSQLAAQITTDVSVPTIGIGAGAGCDGQVLVLHDLLGLDSGHPRPKFVKDFLAHGGSVAGAVRAYANAVRDGSFPDVEHTYTS.

Mg(2+)-binding residues include D51 and D90. 3-methyl-2-oxobutanoate contacts are provided by residues 51–52 (DS), D90, and K118. Mg(2+) is bound at residue E120. E187 acts as the Proton acceptor in catalysis.

This sequence belongs to the PanB family. In terms of assembly, homodecamer; pentamer of dimers. Mg(2+) serves as cofactor.

It is found in the cytoplasm. The catalysed reaction is 3-methyl-2-oxobutanoate + (6R)-5,10-methylene-5,6,7,8-tetrahydrofolate + H2O = 2-dehydropantoate + (6S)-5,6,7,8-tetrahydrofolate. It participates in cofactor biosynthesis; (R)-pantothenate biosynthesis; (R)-pantoate from 3-methyl-2-oxobutanoate: step 1/2. Functionally, catalyzes the reversible reaction in which hydroxymethyl group from 5,10-methylenetetrahydrofolate is transferred onto alpha-ketoisovalerate to form ketopantoate. In Xylella fastidiosa (strain 9a5c), this protein is 3-methyl-2-oxobutanoate hydroxymethyltransferase.